Consider the following 525-residue polypeptide: Mitoguardin (525 aa).

Residues 26 to 45 form a helical membrane-spanning segment; that stretch reads VVLFSLTAGVALMSVLSRFL. Over residues 47-67 the composition is skewed to basic residues; that stretch reads RRKPPRPPRRARKYTGRRNRN. 2 disordered regions span residues 47 to 73 and 210 to 239; these read RRKP…RSPN and DEAE…GSDP. The segment covering 211-220 has biased composition (acidic residues); the sequence is EAEEEAGEAD.

Belongs to the mitoguardin family. In terms of assembly, interacts with zuc.

It is found in the mitochondrion outer membrane. Regulator of mitochondrial fusion required to maintain neuronal homeostasis. This chain is Mitoguardin, found in Drosophila melanogaster (Fruit fly).